The following is a 367-amino-acid chain: tRNA-specific 2-thiouridylase MnmA (367 aa).

Residues 11-18 and methionine 37 each bind ATP; that span reads GLSGGVDS. Residues 109–111 are interaction with target base in tRNA; the sequence is NPD. Residue cysteine 114 is the Nucleophile of the active site. The cysteines at positions 114 and 211 are disulfide-linked. Glycine 139 contributes to the ATP binding site. The segment at 161–163 is interaction with tRNA; that stretch reads KDQ. Cysteine 211 functions as the Cysteine persulfide intermediate in the catalytic mechanism.

Belongs to the MnmA/TRMU family.

The protein resides in the cytoplasm. It catalyses the reaction S-sulfanyl-L-cysteinyl-[protein] + uridine(34) in tRNA + AH2 + ATP = 2-thiouridine(34) in tRNA + L-cysteinyl-[protein] + A + AMP + diphosphate + H(+). Its function is as follows. Catalyzes the 2-thiolation of uridine at the wobble position (U34) of tRNA, leading to the formation of s(2)U34. This is tRNA-specific 2-thiouridylase MnmA from Mycoplasma genitalium (strain ATCC 33530 / DSM 19775 / NCTC 10195 / G37) (Mycoplasmoides genitalium).